Reading from the N-terminus, the 104-residue chain is Putative heat shock protein PS1 (104 aa).

N-linked (GlcNAc...) asparagine glycosylation is found at Asn11 and Asn18. Residue Asn18 participates in ATP binding.

It belongs to the heat shock protein 90 family. As to quaternary structure, homodimer.

The protein localises to the cytoplasm. Its function is as follows. Putative molecular chaperone that may promote the maturation, structural maintenance and proper regulation of specific target proteins. The polypeptide is Putative heat shock protein PS1 (Pinus strobus (Eastern white pine)).